A 180-amino-acid chain; its full sequence is UPF0227 protein Spro_1925 (180 aa).

It belongs to the UPF0227 family.

The chain is UPF0227 protein Spro_1925 from Serratia proteamaculans (strain 568).